The sequence spans 114 residues: Probable acid stress chaperone HdeA (114 aa).

The N-terminal stretch at 1–26 (MIKTLFNKNTALAAVAILALSGSAMA) is a signal peptide. The cysteines at positions 46 and 94 are disulfide-linked.

The protein belongs to the HdeA family.

The protein resides in the periplasm. Its function is as follows. Required for optimal acid stress protection. Exhibits a chaperone-like activity only at low pH by suppressing non-specifically the aggregation of denaturated periplasmic proteins. This is Probable acid stress chaperone HdeA from Brucella ovis (strain ATCC 25840 / 63/290 / NCTC 10512).